Here is a 228-residue protein sequence, read N- to C-terminus: Large ribosomal subunit protein bL25 (228 aa).

Polar residues predominate over residues 1–10 (MNSLDANTRN). Disordered stretches follow at residues 1–20 (MNSLDANTRNTKSKGDVRSL) and 187–228 (MKEP…EEKK). Positions 202-228 (EDGKEAAPAAEGDKKDDGEKKATEEKK) are enriched in basic and acidic residues.

The protein belongs to the bacterial ribosomal protein bL25 family. CTC subfamily. Part of the 50S ribosomal subunit; part of the 5S rRNA/L5/L18/L25 subcomplex. Contacts the 5S rRNA. Binds to the 5S rRNA independently of L5 and L18.

Functionally, this is one of the proteins that binds to the 5S RNA in the ribosome where it forms part of the central protuberance. This is Large ribosomal subunit protein bL25 from Pelagibacter ubique (strain HTCC1062).